A 423-amino-acid polypeptide reads, in one-letter code: CinA-like protein (423 aa).

It belongs to the CinA family.

The chain is CinA-like protein from Synechococcus sp. (strain CC9311).